A 381-amino-acid polypeptide reads, in one-letter code: Queuine tRNA-ribosyltransferase (381 aa).

Aspartate 96 acts as the Proton acceptor in catalysis. Residues 96–100 (DSGGF), aspartate 150, glutamine 193, and glycine 220 contribute to the substrate site. The segment at 251–257 (GVGSPDS) is RNA binding. The Nucleophile role is filled by aspartate 270. Residues 275 to 279 (TRIAR) form an RNA binding; important for wobble base 34 recognition region. Zn(2+) contacts are provided by cysteine 308, cysteine 310, cysteine 313, and histidine 339.

This sequence belongs to the queuine tRNA-ribosyltransferase family. In terms of assembly, homodimer. Within each dimer, one monomer is responsible for RNA recognition and catalysis, while the other monomer binds to the replacement base PreQ1. Zn(2+) serves as cofactor.

It carries out the reaction 7-aminomethyl-7-carbaguanine + guanosine(34) in tRNA = 7-aminomethyl-7-carbaguanosine(34) in tRNA + guanine. The protein operates within tRNA modification; tRNA-queuosine biosynthesis. In terms of biological role, catalyzes the base-exchange of a guanine (G) residue with the queuine precursor 7-aminomethyl-7-deazaguanine (PreQ1) at position 34 (anticodon wobble position) in tRNAs with GU(N) anticodons (tRNA-Asp, -Asn, -His and -Tyr). Catalysis occurs through a double-displacement mechanism. The nucleophile active site attacks the C1' of nucleotide 34 to detach the guanine base from the RNA, forming a covalent enzyme-RNA intermediate. The proton acceptor active site deprotonates the incoming PreQ1, allowing a nucleophilic attack on the C1' of the ribose to form the product. After dissociation, two additional enzymatic reactions on the tRNA convert PreQ1 to queuine (Q), resulting in the hypermodified nucleoside queuosine (7-(((4,5-cis-dihydroxy-2-cyclopenten-1-yl)amino)methyl)-7-deazaguanosine). This chain is Queuine tRNA-ribosyltransferase, found in Bacillus pumilus (strain SAFR-032).